The sequence spans 246 residues: Probable transcriptional regulatory protein RB5500 (246 aa).

It belongs to the TACO1 family.

The protein localises to the cytoplasm. This is Probable transcriptional regulatory protein RB5500 from Rhodopirellula baltica (strain DSM 10527 / NCIMB 13988 / SH1).